The sequence spans 256 residues: MSHVSICLLSEAGADPGALSILADRWGLVSDDQAVMALVLTAERLELRKRDEPKLGGIYVDFVSGTQAHRRKFGGGRGEAVAKAVGIKKGYLPRVVDATAGLGRDAFVLAALGCQVQMLERNPVVAALLDDGLRRGYLDAEIGPWLRERLTLLHASSLTALVAIEPRPEVVYLDPMYPHRQKSALVKKEMRVFQSLVGADNDADGLLAPARALATKRVVVKRPDYAEPLAGVAAQAAVVTKSHRFDIYPSSVTPPR.

S-adenosyl-L-methionine is bound by residues 104-105 (RD), 120-121 (ER), 156-157 (SS), and D174.

Belongs to the methyltransferase superfamily. RsmJ family.

It is found in the cytoplasm. It catalyses the reaction guanosine(1516) in 16S rRNA + S-adenosyl-L-methionine = N(2)-methylguanosine(1516) in 16S rRNA + S-adenosyl-L-homocysteine + H(+). Functionally, specifically methylates the guanosine in position 1516 of 16S rRNA. In Yersinia pseudotuberculosis serotype O:1b (strain IP 31758), this protein is Ribosomal RNA small subunit methyltransferase J.